A 185-amino-acid polypeptide reads, in one-letter code: Cbp/p300-interacting transactivator 4 (185 aa).

Disordered stretches follow at residues Pro15–Gly64 and Tyr95–Leu130. A compositionally biased stretch (pro residues) spans Pro103 to Pro125.

This sequence belongs to the CITED family. As to quaternary structure, interacts via its C-terminal region with the CH1 domain of CREBBP and EP300. Interacts with all TFAP2/AP-2 isoforms.

The protein resides in the nucleus. Its subcellular location is the cytoplasm. Its function is as follows. Acts as a transcriptional coactivator for TFAP2/AP-2. Enhances estrogen-dependent transactivation mediated by estrogen receptors. May function as an inhibitor of transactivation by HIF1A by disrupting HIF1A interaction with CREBBP. May be involved in regulation of gene expression during development and differentiation of blood cells, endothelial cells and mammary epithelial cells. In Bos taurus (Bovine), this protein is Cbp/p300-interacting transactivator 4 (CITED4).